A 1290-amino-acid polypeptide reads, in one-letter code: Alpha-amylase (1290 aa).

The first 31 residues, 1 to 31 (MTRKTRYLHQITTLILGGLLIVPAAAPPVSA), serve as a signal peptide directing secretion. E231 (nucleophile) is an active-site residue. D373 functions as the Proton donor in the catalytic mechanism. The 86-residue stretch at 817–902 (VPANLQATVM…AAATATTPAG (86 aa)) folds into the Fibronectin type-III domain. The segment at 902-978 (GNHVTVYYKQ…SNGGSNYLFG (77 aa)) is CBM25. 2 stretches are compositionally biased toward low complexity: residues 994–1008 (APVAPSATPTVAPTA) and 1016–1031 (VTPTVTPITTPTVAPT). Positions 994-1037 (APVAPSATPTVAPTATPTPKPSVTPTVTPITTPTVAPTLSPTPT) are disordered. A CBM25 region spans residues 1092–1171 (GNSATIYYKN…NGGSNYHFGT (80 aa)). A CBM20 domain is found at 1183-1289 (TGEPQADSVT…VTLTVQRWKD (107 aa)).

It belongs to the glycosyl hydrolase 119 (GH119) family.

Its subcellular location is the secreted. The enzyme catalyses Endohydrolysis of (1-&gt;4)-alpha-D-glucosidic linkages in polysaccharides containing three or more (1-&gt;4)-alpha-linked D-glucose units.. Its function is as follows. Acts on maltooligosaccharides that have a degree of polymerization (DP) of 4 or more, amylose, and soluble or raw starch to produce glucose and maltooligosaccharides up to DP5 by a hydrolysis reaction. Also acts on maltooligosyl trehaloses that have DP5 or more to produce trehalose as the major hydrolysis product. In Niallia circulans (Bacillus circulans), this protein is Alpha-amylase.